Reading from the N-terminus, the 84-residue chain is Alpha-mammal toxin Ts2 (84 aa).

A signal peptide spans 1 to 20; sequence MKGFLLFISILMMIGTIVVG. Positions 21–83 constitute an LCN-type CS-alpha/beta domain; that stretch reads KEGYAMDHEG…VWDYATNKCG (63 aa). 4 cysteine pairs are disulfide-bonded: Cys31–Cys82, Cys35–Cys58, Cys43–Cys63, and Cys47–Cys65. Residue Cys82 is modified to Cysteine amide.

The protein belongs to the long (4 C-C) scorpion toxin superfamily. Sodium channel inhibitor family. Beta subfamily. In terms of tissue distribution, expressed by the venom gland.

It is found in the secreted. Alpha toxins bind voltage-independently at site-3 of sodium channels (Nav) and inhibit the inactivation of the activated channels, thereby blocking neuronal transmission. This toxin acts on Nav1.2/SCN2A, Nav1.3/SCN3A, Nav1.5/SCN5A, Nav1.6/SCN8A and Nav1.7/SCN9A voltage-gated sodium channels, with the highest affinity for Nav1.3/SCN3A, followed by Nav1.6/SCN8A and Nav1.7/SCN9A which are affected almost equally. Interestingly, shows a significant shift of the voltage dependence of activation for Nav1.3/SCN3A that is characteristic of beta-toxins. In addition, in presence of LPS, this toxin inhibits the release of NO, IL-6 and TNF-alpha in J774.1 cells. Further, in the absence of LPS, it stimulates the production of the anti-inflammatory cytokine IL-10. This toxin is active on mammals. The sequence is that of Alpha-mammal toxin Ts2 from Tityus serrulatus (Brazilian scorpion).